Here is a 292-residue protein sequence, read N- to C-terminus: Formamidopyrimidine-DNA glycosylase (292 aa).

Proline 2 (schiff-base intermediate with DNA) is an active-site residue. The Proton donor role is filled by glutamate 3. The active-site Proton donor; for beta-elimination activity is the lysine 58. Positions 98, 128, and 173 each coordinate DNA. The FPG-type zinc-finger motif lies at 258–292 (LVYDRAGQPCRVCATPVRQIVQGQRSTFYCPNCQH). Arginine 282 acts as the Proton donor; for delta-elimination activity in catalysis.

The protein belongs to the FPG family. As to quaternary structure, monomer. Zn(2+) is required as a cofactor.

It catalyses the reaction Hydrolysis of DNA containing ring-opened 7-methylguanine residues, releasing 2,6-diamino-4-hydroxy-5-(N-methyl)formamidopyrimidine.. The catalysed reaction is 2'-deoxyribonucleotide-(2'-deoxyribose 5'-phosphate)-2'-deoxyribonucleotide-DNA = a 3'-end 2'-deoxyribonucleotide-(2,3-dehydro-2,3-deoxyribose 5'-phosphate)-DNA + a 5'-end 5'-phospho-2'-deoxyribonucleoside-DNA + H(+). Its function is as follows. Involved in base excision repair of DNA damaged by oxidation or by mutagenic agents. Acts as a DNA glycosylase that recognizes and removes damaged bases. Has a preference for oxidized purines, such as 7,8-dihydro-8-oxoguanine (8-oxoG). Has AP (apurinic/apyrimidinic) lyase activity and introduces nicks in the DNA strand. Cleaves the DNA backbone by beta-delta elimination to generate a single-strand break at the site of the removed base with both 3'- and 5'-phosphates. This is Formamidopyrimidine-DNA glycosylase from Cupriavidus necator (strain ATCC 17699 / DSM 428 / KCTC 22496 / NCIMB 10442 / H16 / Stanier 337) (Ralstonia eutropha).